Consider the following 248-residue polypeptide: Probable transcriptional regulatory protein Pcar_2335 (248 aa).

This sequence belongs to the TACO1 family.

The protein localises to the cytoplasm. This is Probable transcriptional regulatory protein Pcar_2335 from Syntrophotalea carbinolica (strain DSM 2380 / NBRC 103641 / GraBd1) (Pelobacter carbinolicus).